Reading from the N-terminus, the 145-residue chain is Protein SprT-like (145 aa).

Residues 5-141 (DYVREVSLAD…CGRCHGRLIK (137 aa)) form the SprT-like domain. Zn(2+) is bound at residue H64. E65 is an active-site residue. Residue H68 participates in Zn(2+) binding.

It belongs to the SprT family. It depends on Zn(2+) as a cofactor.

Its subcellular location is the cytoplasm. In Streptococcus equi subsp. zooepidemicus (strain H70), this protein is Protein SprT-like.